Here is a 598-residue protein sequence, read N- to C-terminus: Centrosomal protein of 70 kDa (598 aa).

Over residues 16–38 (DSTKEPLSTVTSQAQDSSLSANR) the composition is skewed to polar residues. Positions 16-43 (DSTKEPLSTVTSQAQDSSLSANRPVTEK) are disordered. Coiled-coil stretches lie at residues 99–210 (TRQQ…EEDR) and 255–317 (TYKG…NIKL). One copy of the TPR repeat lies at 484 to 517 (NGVYPRMNEVYARLGEMNNAVRNLQELLGLDSSS).

In terms of assembly, directly interacts with tubulin-gamma; this interaction determines centrosomal localization.

The protein localises to the cytoplasm. The protein resides in the cytoskeleton. It is found in the microtubule organizing center. It localises to the centrosome. Functionally, plays a role in the organization of both preexisting and nascent microtubules in interphase cells. During mitosis, required for the organization and orientation of the mitotic spindle. The protein is Centrosomal protein of 70 kDa (Cep70) of Rattus norvegicus (Rat).